The chain runs to 155 residues: Urease accessory protein UreE (155 aa).

The protein belongs to the UreE family.

Its subcellular location is the cytoplasm. In terms of biological role, involved in urease metallocenter assembly. Binds nickel. Probably functions as a nickel donor during metallocenter assembly. The chain is Urease accessory protein UreE from Synechococcus sp. (strain CC9311).